We begin with the raw amino-acid sequence, 399 residues long: Acetate kinase 2 (399 aa).

N10 provides a ligand contact to Mg(2+). K17 is an ATP binding site. Position 89 (R89) interacts with substrate. D146 functions as the Proton donor/acceptor in the catalytic mechanism. Residues 206 to 210, 281 to 283, and 329 to 333 contribute to the ATP site; these read HLGNG, DCR, and GIGEN. Residue E384 coordinates Mg(2+).

Belongs to the acetokinase family. In terms of assembly, homodimer. Mg(2+) is required as a cofactor. Requires Mn(2+) as cofactor.

The protein resides in the cytoplasm. The enzyme catalyses acetate + ATP = acetyl phosphate + ADP. It functions in the pathway metabolic intermediate biosynthesis; acetyl-CoA biosynthesis; acetyl-CoA from acetate: step 1/2. Its function is as follows. Catalyzes the formation of acetyl phosphate from acetate and ATP. Can also catalyze the reverse reaction. This Neisseria meningitidis serogroup A / serotype 4A (strain DSM 15465 / Z2491) protein is Acetate kinase 2.